Here is a 225-residue protein sequence, read N- to C-terminus: Receptor-transporting protein 2 (225 aa).

Topologically, residues 1-196 (MCTSLTTCEW…RAQAGSGYNF (196 aa)) are cytoplasmic. The 3CxxC-type zinc-finger motif lies at 52–161 (ASGRFHCSWC…AEFCEACQEG (110 aa)). A helical membrane pass occupies residues 197–219 (LSLRWCLFWASLCLLVVYLQFSF). Topologically, residues 220 to 225 (LSPAFF) are extracellular.

It belongs to the TMEM7 family. In terms of assembly, interacts with olfactory receptors. As to expression, expressed in circumvallate papillae and testis.

It is found in the cell membrane. Functionally, specifically promotes functional cell surface expression of olfactory receptors, but not of other GPCRs. This is Receptor-transporting protein 2 (RTP2) from Homo sapiens (Human).